The following is a 207-amino-acid chain: Protein FMP32, mitochondrial (207 aa).

The stretch at 100–136 forms a coiled coil; it reads ADRSEFHNIQNEYESVKNDLEKLRNKLREEITKTNAG. A helical transmembrane segment spans residues 184-206; the sequence is VMQWLIGVCTGTFALVLAYMRLL.

This sequence belongs to the CCDC90 family.

The protein resides in the mitochondrion. It localises to the membrane. The chain is Protein FMP32, mitochondrial (FMP32) from Saccharomyces cerevisiae (strain ATCC 204508 / S288c) (Baker's yeast).